The primary structure comprises 491 residues: Ketol-acid reductoisomerase (NADP(+)) (491 aa).

One can recognise a KARI N-terminal Rossmann domain in the interval 15–208 (AQLGTCRFME…GGHRAGVLES (194 aa)). Residues 45-48 (CGAQ), R68, R76, S78, and 108-110 (DKQ) each bind NADP(+). H132 is a catalytic residue. G158 serves as a coordination point for NADP(+). KARI C-terminal knotted domains are found at residues 209–353 (SFVA…KEQE) and 354–486 (YFDK…MTAM). Mg(2+)-binding residues include D217, E221, E389, and E393. S414 is a substrate binding site.

Belongs to the ketol-acid reductoisomerase family. Requires Mg(2+) as cofactor.

The enzyme catalyses (2R)-2,3-dihydroxy-3-methylbutanoate + NADP(+) = (2S)-2-acetolactate + NADPH + H(+). It carries out the reaction (2R,3R)-2,3-dihydroxy-3-methylpentanoate + NADP(+) = (S)-2-ethyl-2-hydroxy-3-oxobutanoate + NADPH + H(+). The protein operates within amino-acid biosynthesis; L-isoleucine biosynthesis; L-isoleucine from 2-oxobutanoate: step 2/4. It participates in amino-acid biosynthesis; L-valine biosynthesis; L-valine from pyruvate: step 2/4. Involved in the biosynthesis of branched-chain amino acids (BCAA). Catalyzes an alkyl-migration followed by a ketol-acid reduction of (S)-2-acetolactate (S2AL) to yield (R)-2,3-dihydroxy-isovalerate. In the isomerase reaction, S2AL is rearranged via a Mg-dependent methyl migration to produce 3-hydroxy-3-methyl-2-ketobutyrate (HMKB). In the reductase reaction, this 2-ketoacid undergoes a metal-dependent reduction by NADPH to yield (R)-2,3-dihydroxy-isovalerate. This chain is Ketol-acid reductoisomerase (NADP(+)), found in Christiangramia forsetii (strain DSM 17595 / CGMCC 1.15422 / KT0803) (Gramella forsetii).